A 642-amino-acid polypeptide reads, in one-letter code: ATP-dependent zinc metalloprotease FtsH (642 aa).

Topologically, residues 1-6 (MGRFTK) are cytoplasmic. A helical membrane pass occupies residues 7-27 (NIVLYLLIIAAFVIAIDAFSG). Residues 28-101 (QSANKSELSY…TAAPPEQPAW (74 aa)) lie on the Extracellular side of the membrane. The chain crosses the membrane as a helical span at residues 102 to 122 (WMSLLGSAIPIIILVVLFFFI). Residues 123 to 642 (MQQTQGGGGR…LSEASSNEIK (520 aa)) lie on the Cytoplasmic side of the membrane. Position 194–201 (194–201 (GPPGTGKT)) interacts with ATP. His416 is a Zn(2+) binding site. Glu417 is an active-site residue. Residues His420 and Asp492 each coordinate Zn(2+). Over residues 597–610 (TTKEPEAEEPKVAS) the composition is skewed to basic and acidic residues. Residues 597–642 (TTKEPEAEEPKVASEADSSIVPEGVDAKKTTSTVADLSEASSNEIK) are disordered. Residues 626–642 (TTSTVADLSEASSNEIK) show a composition bias toward polar residues.

In the central section; belongs to the AAA ATPase family. It in the C-terminal section; belongs to the peptidase M41 family. As to quaternary structure, homohexamer. Requires Zn(2+) as cofactor.

The protein localises to the cell membrane. In terms of biological role, acts as a processive, ATP-dependent zinc metallopeptidase for both cytoplasmic and membrane proteins. Plays a role in the quality control of integral membrane proteins. This Veillonella parvula (strain ATCC 10790 / DSM 2008 / CCUG 5123 / JCM 12972 / NCTC 11810 / Te3) (Veillonella alcalescens) protein is ATP-dependent zinc metalloprotease FtsH.